The chain runs to 460 residues: Ankyrin repeat and MYND domain-containing protein 2 (460 aa).

3 ANK repeats span residues 45-74 (HGMTPLMHAAYKGKVDMCRLLLRHGADVNC), 79-108 (HGYTALMFAGLSGNKEITWMMLEAGAETDV), and 159-188 (KLAGPLHKIITTTNMHPVKIVLLVKENPLL). Zn(2+) contacts are provided by cysteine 320, cysteine 323, cysteine 332, cysteine 335, cysteine 341, cysteine 345, histidine 353, and cysteine 357. The MYND-type zinc-finger motif lies at 320 to 357 (CTTCGEKGADKRCSVCKVVMYCDQNCQKTHWFTHKKVC). Basic and acidic residues-rich tracts occupy residues 371–387 (AAKEKRRQEKKQKKDEA) and 425–436 (ELTKEPEARAPR). The disordered stretch occupies residues 371-460 (AAKEKRRQEK…ALQKIQDSEE (90 aa)).

The protein localises to the cell projection. The protein resides in the cilium. In terms of biological role, may be involved in the trafficking of signaling proteins to the cilia. The protein is Ankyrin repeat and MYND domain-containing protein 2 (ANKMY2) of Gallus gallus (Chicken).